The sequence spans 199 residues: Putative inactive ribonuclease 11 (199 aa).

The signal sequence occupies residues 1 to 16 (METFPLLLLSLGLVLA). N-linked (GlcNAc...) asparagine glycosylation occurs at N61. Residue H82 is the Proton acceptor of the active site. N89 and N111 each carry an N-linked (GlcNAc...) asparagine glycan. Disulfide bonds link C98–C158 and C114–C169. 115–119 (KWSNN) serves as a coordination point for substrate.

Belongs to the pancreatic ribonuclease family.

It localises to the secreted. The polypeptide is Putative inactive ribonuclease 11 (RNASE11) (Homo sapiens (Human)).